The sequence spans 382 residues: Gap junction alpha-1 protein (382 aa).

Topologically, residues 2–23 (GDWSALGKLLDKVQAYSTAGGK) are cytoplasmic. Ser5 is subject to Phosphoserine. The chain crosses the membrane as a helical span at residues 24 to 44 (VWLSVLFIFRILLLGTAVESA). The Extracellular portion of the chain corresponds to 45–76 (WGDEQSAFRCNTQQPGCENVCYDKSFPISHVR). 2 cysteine pairs are disulfide-bonded: Cys54/Cys192 and Cys187/Cys198. A helical transmembrane segment spans residues 77-97 (FWVLQIIFVSVPTLLYLAHVF). Residues 98-155 (YVMRKEEKLNKKEEELKVAQTDGVNVEMHLKQIEIKKFKYGIEEHGKVKMRGGLLRTY) are Cytoplasmic-facing. Residue Lys144 forms a Glycyl lysine isopeptide (Lys-Gly) (interchain with G-Cter in SUMO) linkage. A helical membrane pass occupies residues 156–176 (IISILFKSIFEVAFLLIQWYI). At 177 to 207 (YGFSLSAVYTCKRDPCPHQVDCFLSRPTEKT) the chain is on the extracellular side. Residues 208 to 228 (IFIIFMLVVSLVSLALNIIEL) traverse the membrane as a helical segment. Residues 229 to 382 (FYVFFKGVKD…SRPRPDDLEI (154 aa)) lie on the Cytoplasmic side of the membrane. Lys237 is covalently cross-linked (Glycyl lysine isopeptide (Lys-Gly) (interchain with G-Cter in SUMO)). The interval 244–382 (SDPYHTTSGA…SRPRPDDLEI (139 aa)) is interaction with NOV. Residue Tyr247 is modified to Phosphotyrosine. Phosphoserine occurs at positions 255 and 262. Residues 264–382 (KYAYFNGCSS…SRPRPDDLEI (119 aa)) are interaction with UBQLN4. Cys271 is subject to S-nitrosocysteine. Residue Thr275 is modified to Phosphothreonine. Phosphoserine occurs at positions 306 and 314. Over residues 317 to 332 (QNRMGQAGSTISNSHA) the composition is skewed to polar residues. The segment at 317–382 (QNRMGQAGST…SRPRPDDLEI (66 aa)) is disordered. Ser325 is modified (phosphoserine; by CK1). Residue Thr326 is modified to Phosphothreonine. Phosphoserine; by CK1 is present on residues Ser328 and Ser330. Residues Ser344 and Ser365 each carry the phosphoserine modification. A compositionally biased stretch (low complexity) spans 362-374 (RPSSRASSRASSR). Ser368 is subject to Phosphoserine; by PKC/PRKCG and PKC/PRKCD. A phosphoserine mark is found at Ser369 and Ser373.

Belongs to the connexin family. Alpha-type (group II) subfamily. In terms of assembly, a connexon is composed of a hexamer of connexins. Interacts with SGSM3. Interacts with RIC1/CIP150. Interacts with CNST and CSNK1D. Interacts (via C-terminus) with TJP1. Interacts (via C-terminus) with SRC (via SH3 domain). Interacts (not ubiquitinated) with UBQLN4 (via UBA domain). Interacts with NOV. Interacts with TMEM65. Interacts with ANK3/ANKG and PKP2. Phosphorylation at Ser-325, Ser-328 and Ser-330 by CK1 modulates gap junction assembly. Phosphorylated at Ser-368 by PRKCG; phosphorylation induces disassembly of gap junction plaques and inhibition of gap junction activity. Phosphorylation at Ser-368 by PRKCD triggers its internalization into small vesicles leading to proteasome-mediated degradation. In terms of processing, sumoylated with SUMO1, SUMO2 and SUMO3, which may regulate the level of functional Cx43 gap junctions at the plasma membrane. May be desumoylated by SENP1 or SENP2. Post-translationally, S-nitrosylation at Cys-271 is enriched at the muscle endothelial gap junction in arteries, it augments channel permeability and may regulate of smooth muscle cell to endothelial cell communication. Acetylated in the developing cortex; leading to delocalization from the cell membrane.

The protein localises to the cell membrane. It localises to the cell junction. The protein resides in the gap junction. It is found in the endoplasmic reticulum. In terms of biological role, gap junction protein that acts as a regulator of bladder capacity. A gap junction consists of a cluster of closely packed pairs of transmembrane channels, the connexons, through which materials of low MW diffuse from one cell to a neighboring cell. May play a critical role in the physiology of hearing by participating in the recycling of potassium to the cochlear endolymph. Negative regulator of bladder functional capacity: acts by enhancing intercellular electrical and chemical transmission, thus sensitizing bladder muscles to cholinergic neural stimuli and causing them to contract. May play a role in cell growth inhibition through the regulation of NOV expression and localization. Plays an essential role in gap junction communication in the ventricles. In Chlorocebus aethiops (Green monkey), this protein is Gap junction alpha-1 protein (GJA1).